The chain runs to 393 residues: Proteasome-activating nucleotidase (393 aa).

Residues 15-53 (DEVQLVRLLEEKIKSLQIEIENLRKELNYYKAEMEKMLS) adopt a coiled-coil conformation. ATP contacts are provided by residues 178-183 (GTGKTM) and Y317. Residues 365-393 (MNDLVEAINKINVKRNKMESMKERREKYS) are a coiled coil. The interval 391–393 (KYS) is docks into pockets in the proteasome alpha-ring to cause gate opening.

The protein belongs to the AAA ATPase family. In terms of assembly, homohexamer. The hexameric complex has a two-ring architecture resembling a top hat that caps the 20S proteasome core at one or both ends. Upon ATP-binding, the C-terminus of PAN interacts with the alpha-rings of the proteasome core by binding to the intersubunit pockets.

It localises to the cytoplasm. In terms of biological role, ATPase which is responsible for recognizing, binding, unfolding and translocation of substrate proteins into the archaeal 20S proteasome core particle. Is essential for opening the gate of the 20S proteasome via an interaction with its C-terminus, thereby allowing substrate entry and access to the site of proteolysis. Thus, the C-termini of the proteasomal ATPase function like a 'key in a lock' to induce gate opening and therefore regulate proteolysis. Unfolding activity requires energy from ATP hydrolysis, whereas ATP binding alone promotes ATPase-20S proteasome association which triggers gate opening, and supports translocation of unfolded substrates. The polypeptide is Proteasome-activating nucleotidase (Saccharolobus solfataricus (strain ATCC 35092 / DSM 1617 / JCM 11322 / P2) (Sulfolobus solfataricus)).